Reading from the N-terminus, the 51-residue chain is MAPPQHLCGSHLVDALYLVCGDRGFFYNPKGIVDQCCHRPCDIFDLQNYCN.

3 disulfide bridges follow: C8/C37, C20/C50, and C36/C41.

It belongs to the insulin family. Heterodimer of a B chain and an A chain linked by two disulfide bonds.

Its subcellular location is the secreted. In terms of biological role, insulin decreases blood glucose concentration. It increases cell permeability to monosaccharides, amino acids and fatty acids. It accelerates glycolysis, the pentose phosphate cycle, and glycogen synthesis in liver. This is Insulin (ins) from Gadus morhua subsp. callarias (Baltic cod).